A 288-amino-acid chain; its full sequence is Large ribosomal subunit protein uL2 (288 aa).

A disordered region spans residues 232–265 (GTAMNPVDHPHGGGEGKTKGKHPESPWGWKTKGY). Over residues 239–255 (DHPHGGGEGKTKGKHPE) the composition is skewed to basic and acidic residues.

This sequence belongs to the universal ribosomal protein uL2 family. As to quaternary structure, part of the 50S ribosomal subunit. Forms a bridge to the 30S subunit in the 70S ribosome.

In terms of biological role, one of the primary rRNA binding proteins. Required for association of the 30S and 50S subunits to form the 70S ribosome, for tRNA binding and peptide bond formation. It has been suggested to have peptidyltransferase activity; this is somewhat controversial. Makes several contacts with the 16S rRNA in the 70S ribosome. The chain is Large ribosomal subunit protein uL2 from Hydrogenobaculum sp. (strain Y04AAS1).